We begin with the raw amino-acid sequence, 337 residues long: DNA-directed RNA polymerase subunit alpha (337 aa).

Residues 1-233 are alpha N-terminal domain (alpha-NTD); that stretch reads MVREKVKVST…NLFIPFLHVE (233 aa). Residues 267–337 form an alpha C-terminal domain (alpha-CTD) region; that stretch reads LAFQYIFIDQ…IEKAFQKKID (71 aa).

It belongs to the RNA polymerase alpha chain family. As to quaternary structure, in plastids the minimal PEP RNA polymerase catalytic core is composed of four subunits: alpha, beta, beta', and beta''. When a (nuclear-encoded) sigma factor is associated with the core the holoenzyme is formed, which can initiate transcription.

The protein resides in the plastid. It is found in the chloroplast. It catalyses the reaction RNA(n) + a ribonucleoside 5'-triphosphate = RNA(n+1) + diphosphate. DNA-dependent RNA polymerase catalyzes the transcription of DNA into RNA using the four ribonucleoside triphosphates as substrates. This Arabis hirsuta (Hairy rock-cress) protein is DNA-directed RNA polymerase subunit alpha.